A 139-amino-acid polypeptide reads, in one-letter code: D-ribose pyranase (139 aa).

The Proton donor role is filled by H20. Residues D28, H106, and 128-130 contribute to the substrate site; that span reads YAN.

It belongs to the RbsD / FucU family. RbsD subfamily. As to quaternary structure, homodecamer.

The protein resides in the cytoplasm. The enzyme catalyses beta-D-ribopyranose = beta-D-ribofuranose. The protein operates within carbohydrate metabolism; D-ribose degradation; D-ribose 5-phosphate from beta-D-ribopyranose: step 1/2. Functionally, catalyzes the interconversion of beta-pyran and beta-furan forms of D-ribose. The protein is D-ribose pyranase of Salmonella choleraesuis (strain SC-B67).